Consider the following 764-residue polypeptide: Complement factor B (764 aa).

The first 25 residues, 1–25 (MGSNLSPQLCLMPFILGLLSGGVTT), serve as a signal peptide directing secretion. Sushi domains lie at 35–100 (GSCS…ECRA), 101–160 (IHCP…ICDN), and 163–220 (GYCS…SCQD). Intrachain disulfides connect C37–C76, C62–C98, C103–C145, C131–C158, C165–C205, and C191–C218. Residues N122 and N142 are each glycosylated (N-linked (GlcNAc...) asparagine). One can recognise a VWFA domain in the interval 270–469 (NIYLVLDGSD…NLEDVFFQMI (200 aa)). Positions 278 and 280 each coordinate Mg(2+). The N-linked (GlcNAc...) asparagine glycan is linked to N285. Position 353 (T353) interacts with Mg(2+). The N-linked (GlcNAc...) asparagine glycan is linked to N378. The region spanning 477–757 (LCGMVWEHRK…VLPWLKQKLQ (281 aa)) is the Peptidase S1 domain. 5 disulfide bridges follow: C478/C596, C511/C527, C599/C615, C656/C682, and C695/C725. Residues H526 and D576 each act as charge relay system in the active site. S699 serves as the catalytic Charge relay system.

Belongs to the peptidase S1 family. Monomer. Interacts with complement C3b; this interaction is dependent on the presence of Mg(2+). In terms of assembly, catalytic component of the C3 convertase of the alternative complement pathway, also named C3bBb, composed of complement factor B Bb and complement C3b. Catalytic component of the C5 convertase of the alternative complement pathway, also named C3bBb3b, composed of complement factor B Bb and additional molecules of complement C3b. Interacts to CFP; this interaction contributes to the stabilization of the active C3-convertase enzyme complex. It depends on Mg(2+) as a cofactor. Mn(2+) is required as a cofactor. In terms of processing, cleaved by CFD following activation of the alternative complement system, generating Ba and Bb chains. Cleavage and activation takes place when CFB is already associated with complement C3b.

It is found in the secreted. The protein resides in the cell surface. The enzyme catalyses Cleavage of Arg-|-Ser bond in complement component C3 alpha-chain to yield C3a and C3b, and Arg-|-Xaa bond in complement component C5 alpha-chain to yield C5a and C5b.. In terms of biological role, precursor of the catalytic component of the C3 and C5 convertase complexes of the alternative pathway of the complement system, a cascade of proteins that leads to phagocytosis and breakdown of pathogens and signaling that strengthens the adaptive immune system. The alternative complement pathway acts as an amplification loop that enhances other complement pathways (classical, lectin and GZMK) by promoting formation of additional C3 and C5 convertases. CFB is cleaved and activated by CFD to generate Ba and Bb chains; Bb chain constituting the catalytic component of the C3 and C5 convertases. Its function is as follows. Serine protease component of the complement C3 and C5 convertase complexes of the alternative complement pathway. Following cleavage and activation by factor D (CFD), forms the C3 convertase together with complement C3b. As part of the C3 convertase, cleaves and activates C3 into C3a anaphylatoxin and C3b opsonin, the next components of the complement pathways. When an additional complement C3b molecule binds to the C3 convertase, forms the C5 convertase, which cleaves and activates C5 into C5a anaphylatoxin and C5b component of the membrane attack complex. Involved in proliferation and differentiation of preactivated B-lymphocytes, rapid spreading of peripheral blood monocytes, stimulation of lymphocyte blastogenesis and lysis of erythrocytes. This chain is Complement factor B (CFB), found in Pongo pygmaeus (Bornean orangutan).